The chain runs to 260 residues: uncharacterized protein (260 aa).

The protein belongs to the methyltransferase superfamily.

Its subcellular location is the cytoplasm. The protein localises to the nucleus. Probable methyltransferase. This is an uncharacterized protein from Schizosaccharomyces pombe (strain 972 / ATCC 24843) (Fission yeast).